The primary structure comprises 213 residues: uncharacterized protein (213 aa).

2 coiled-coil regions span residues 54–78 and 108–151; these read KEQT…NLKL and VKDV…STSK. Positions 122–142 are enriched in basic and acidic residues; sequence IEKEKEEEKAAKKAEKAEEKK. The segment at 122 to 213 is disordered; it reads IEKEKEEEKA…FGGKPTGQIW (92 aa). The span at 146–188 shows a compositional bias: low complexity; it reads KNSTSKSGSKSSKSSSGSSKSSSKSSKSSKSSSGSSKSSSKSS. The segment covering 189 to 199 has biased composition (basic residues); it reads KNSKKSSKKSN.

Belongs to the mimivirus R546 family.

This is an uncharacterized protein from Acanthamoeba polyphaga (Amoeba).